The sequence spans 157 residues: Pyruvoyl-dependent arginine decarboxylase (157 aa).

Residue serine 44 is modified to Pyruvic acid (Ser).

The protein belongs to the PdaD family. Requires pyruvate as cofactor.

It carries out the reaction L-arginine + H(+) = agmatine + CO2. This chain is Pyruvoyl-dependent arginine decarboxylase, found in Thermococcus kodakarensis (strain ATCC BAA-918 / JCM 12380 / KOD1) (Pyrococcus kodakaraensis (strain KOD1)).